We begin with the raw amino-acid sequence, 151 residues long: Acidic phospholipase A2 2 (151 aa).

A signal peptide spans 1 to 27; the sequence is MYPAHLLVLLAVCVSLLGAASIPARPL. Intrachain disulfides connect Cys38–Cys104, Cys54–Cys151, Cys56–Cys72, Cys71–Cys132, Cys78–Cys125, Cys88–Cys118, and Cys111–Cys123. Residues Tyr55, Gly57, and Gly59 each contribute to the Ca(2+) site. Residue His75 is part of the active site. Position 76 (Asp76) interacts with Ca(2+). Asp126 is an active-site residue.

This sequence belongs to the phospholipase A2 family. Group I subfamily. D49 sub-subfamily. The cofactor is Ca(2+). In terms of tissue distribution, expressed by the venom gland.

Its subcellular location is the secreted. The enzyme catalyses a 1,2-diacyl-sn-glycero-3-phosphocholine + H2O = a 1-acyl-sn-glycero-3-phosphocholine + a fatty acid + H(+). In terms of biological role, PLA2 catalyzes the calcium-dependent hydrolysis of the 2-acyl groups in 3-sn-phosphoglycerides. In Tropidechis carinatus (Australian rough-scaled snake), this protein is Acidic phospholipase A2 2.